The sequence spans 476 residues: Sulfate adenylyltransferase subunit 1 (476 aa).

Positions 24-239 (KSMLRFLTCG…VLENVDIDQK (216 aa)) constitute a tr-type G domain. The interval 33–40 (GSVDDGKS) is G1. A GTP-binding site is contributed by 33-40 (GSVDDGKS). The interval 91-95 (GITID) is G2. The tract at residues 112–115 (DTPG) is G3. GTP contacts are provided by residues 112–116 (DTPGH) and 167–170 (NKMD). Residues 167–170 (NKMD) form a G4 region. A G5 region spans residues 205–207 (SAL).

It belongs to the TRAFAC class translation factor GTPase superfamily. Classic translation factor GTPase family. CysN/NodQ subfamily. Heterodimer composed of CysD, the smaller subunit, and CysN.

It carries out the reaction sulfate + ATP + H(+) = adenosine 5'-phosphosulfate + diphosphate. It functions in the pathway sulfur metabolism; hydrogen sulfide biosynthesis; sulfite from sulfate: step 1/3. Functionally, with CysD forms the ATP sulfurylase (ATPS) that catalyzes the adenylation of sulfate producing adenosine 5'-phosphosulfate (APS) and diphosphate, the first enzymatic step in sulfur assimilation pathway. APS synthesis involves the formation of a high-energy phosphoric-sulfuric acid anhydride bond driven by GTP hydrolysis by CysN coupled to ATP hydrolysis by CysD. The sequence is that of Sulfate adenylyltransferase subunit 1 from Vibrio atlanticus (strain LGP32) (Vibrio splendidus (strain Mel32)).